Consider the following 955-residue polypeptide: UPF0182 protein PMT_0755 (955 aa).

9 helical membrane passes run 25 to 45, 58 to 78, 107 to 127, 146 to 166, 178 to 198, 214 to 234, 264 to 284, 313 to 333, and 340 to 360; these read LLLS…WLWF, WLWQ…CQLW, LLGC…LAWL, IWAL…MLGN, CFCF…ALAI, FGLG…AQLI, CNFL…LLWL, SLAS…TWIQ, and LIAS…APFV.

Belongs to the UPF0182 family.

The protein localises to the cell membrane. In Prochlorococcus marinus (strain MIT 9313), this protein is UPF0182 protein PMT_0755.